The primary structure comprises 255 residues: NAD kinase (255 aa).

Residue aspartate 44 is the Proton acceptor of the active site. NAD(+) contacts are provided by residues 44 to 45 (DG), histidine 49, 114 to 115 (NE), aspartate 144, alanine 152, 155 to 160 (SAYNLS), and glutamine 216.

This sequence belongs to the NAD kinase family. Requires a divalent metal cation as cofactor.

Its subcellular location is the cytoplasm. It catalyses the reaction NAD(+) + ATP = ADP + NADP(+) + H(+). Functionally, involved in the regulation of the intracellular balance of NAD and NADP, and is a key enzyme in the biosynthesis of NADP. Catalyzes specifically the phosphorylation on 2'-hydroxyl of the adenosine moiety of NAD to yield NADP. The sequence is that of NAD kinase from Rickettsia felis (strain ATCC VR-1525 / URRWXCal2) (Rickettsia azadi).